Reading from the N-terminus, the 353-residue chain is Trans-enoyl reductase RAP2 (353 aa).

46–49 (CDHK) is a binding site for NADP(+). A substrate-binding site is contributed by 131-138 (TGLSTIGM). Residues 189–192 (SPRN), Tyr-207, and 254–255 (LE) contribute to the NADP(+) site. Substrate is bound at residue 274-278 (GMALL). Residue 343 to 344 (VS) participates in NADP(+) binding.

The protein belongs to the zinc-containing alcohol dehydrogenase family. As to quaternary structure, monomer.

Its pathway is secondary metabolite biosynthesis. Its function is as follows. Trans-enoyl reductase; part of the gene cluster that mediates the biosynthesis of a tyrosine-derived cytochalasan acting as a fungal signal recognized by resistant rice plants and leads to avirulence in Pi33 resistant rice cultivars. The first step in the pathway is catalyzed by the hybrid PKS-NRPS ACE1, assisted by the enoyl reductase RAP1, that are responsible for fusion of the tyrosine precursor and the polyketide backbone. The polyketide synthase module (PKS) of ACE1 is responsible for the synthesis of the polyketide backbone and the downstream nonribosomal peptide synthetase (NRPS) amidates the carboxyl end of the polyketide with the tyrosine precursor. Because ACE1 lacks a designated enoylreductase (ER) domain, the required activity is provided the enoyl reductase RAP1. Reduction by the hydrolyase ORFZ, followed by dehydration and intra-molecular Diels-Alder cyclization by the Diels-Alderase ORF3 then yield the required isoindolone-fused macrocycle. A number of oxidative steps catalyzed by the tailoring enzymes identified within the cluster, including cytochrome P450 monooxygenases CYP1 to CYP4, the FAD-linked oxidoreductase OXR2 and the short-chain dehydrogenase/reductase OXR1, are further required to afford the final cytochalasans that confer avirulence and which have still to be identified. The monooxygenase CYP1 has been shown to be a site-selective C-18 hydroxylase whereas the function of CYP3 is the site-selective epoxidation of the C-6/C-7 olefin that is present in some intermediate compounds. Finally, SYN2 and RAP2 are not required for avirulence in Pi33 resistant rice cultivars. This chain is Trans-enoyl reductase RAP2, found in Pyricularia oryzae (strain 70-15 / ATCC MYA-4617 / FGSC 8958) (Rice blast fungus).